The chain runs to 294 residues: Picrinine-N-methytransferase TMT2 (294 aa).

Residues 75–84 are SAM motif I; it reads LLDVGCGLGG. Positions 137–143 match the Vacuolar targeting signal motif; sequence DGEFDVV. Residues 138–146 are SAM motif II; that stretch reads GEFDVVFTL. The segment at 165–174 is SAM motif III; that stretch reads VGSPGAAIVV.

It belongs to the class I-like SAM-binding methyltransferase superfamily. gTMT family. As to quaternary structure, homodimer.

Its subcellular location is the vacuole membrane. The catalysed reaction is picrinine + S-adenosyl-L-methionine = ervincine + S-adenosyl-L-homocysteine + H(+). The protein operates within alkaloid biosynthesis; vindoline biosynthesis. Functionally, S-adenosyl-L-methionine-dependent N-methyltransferase involved in the biosynthesis of biologically active monoterpenoid indole alkaloids (MIAs) natural products including vindoline. Catalyzes the conversion of picrinine to N-methylpicrinine (ervincine). The chain is Picrinine-N-methytransferase TMT2 from Catharanthus roseus (Madagascar periwinkle).